The following is a 365-amino-acid chain: tRNA 2-selenouridine synthase (365 aa).

The 124-residue stretch at 15–138 (FIAGQPLIDL…MRQYLIGVIE (124 aa)) folds into the Rhodanese domain. Cys98 (S-selanylcysteine intermediate) is an active-site residue.

It belongs to the SelU family. As to quaternary structure, monomer.

The enzyme catalyses 5-methylaminomethyl-2-thiouridine(34) in tRNA + selenophosphate + (2E)-geranyl diphosphate + H2O + H(+) = 5-methylaminomethyl-2-selenouridine(34) in tRNA + (2E)-thiogeraniol + phosphate + diphosphate. The catalysed reaction is 5-methylaminomethyl-2-thiouridine(34) in tRNA + (2E)-geranyl diphosphate = 5-methylaminomethyl-S-(2E)-geranyl-thiouridine(34) in tRNA + diphosphate. It catalyses the reaction 5-methylaminomethyl-S-(2E)-geranyl-thiouridine(34) in tRNA + selenophosphate + H(+) = 5-methylaminomethyl-2-(Se-phospho)selenouridine(34) in tRNA + (2E)-thiogeraniol. It carries out the reaction 5-methylaminomethyl-2-(Se-phospho)selenouridine(34) in tRNA + H2O = 5-methylaminomethyl-2-selenouridine(34) in tRNA + phosphate. Its function is as follows. Involved in the post-transcriptional modification of the uridine at the wobble position (U34) of tRNA(Lys), tRNA(Glu) and tRNA(Gln). Catalyzes the conversion of 2-thiouridine (S2U-RNA) to 2-selenouridine (Se2U-RNA). Acts in a two-step process involving geranylation of 2-thiouridine (S2U) to S-geranyl-2-thiouridine (geS2U) and subsequent selenation of the latter derivative to 2-selenouridine (Se2U) in the tRNA chain. This chain is tRNA 2-selenouridine synthase, found in Shewanella sp. (strain ANA-3).